The following is a 465-amino-acid chain: UDP-N-acetylmuramate--L-alanine ligase (465 aa).

115-121 (GTHGKTT) contributes to the ATP binding site.

This sequence belongs to the MurCDEF family.

It localises to the cytoplasm. It carries out the reaction UDP-N-acetyl-alpha-D-muramate + L-alanine + ATP = UDP-N-acetyl-alpha-D-muramoyl-L-alanine + ADP + phosphate + H(+). It participates in cell wall biogenesis; peptidoglycan biosynthesis. Its function is as follows. Cell wall formation. This chain is UDP-N-acetylmuramate--L-alanine ligase, found in Renibacterium salmoninarum (strain ATCC 33209 / DSM 20767 / JCM 11484 / NBRC 15589 / NCIMB 2235).